Consider the following 245-residue polypeptide: 2,3-bisphosphoglycerate-dependent phosphoglycerate mutase (245 aa).

Substrate is bound by residues Arg8 to Asn15, Thr21 to Gly22, Arg60, Glu87 to Tyr90, Lys98, Arg114 to Arg115, and Gly183 to Asn184. Residue His9 is the Tele-phosphohistidine intermediate of the active site. Glu87 serves as the catalytic Proton donor/acceptor.

It belongs to the phosphoglycerate mutase family. BPG-dependent PGAM subfamily.

The catalysed reaction is (2R)-2-phosphoglycerate = (2R)-3-phosphoglycerate. Its pathway is carbohydrate degradation; glycolysis; pyruvate from D-glyceraldehyde 3-phosphate: step 3/5. In terms of biological role, catalyzes the interconversion of 2-phosphoglycerate and 3-phosphoglycerate. The protein is 2,3-bisphosphoglycerate-dependent phosphoglycerate mutase of Bacillus cereus (strain AH187).